We begin with the raw amino-acid sequence, 207 residues long: Putative transcriptional regulator (207 aa).

The Response regulatory domain occupies 3-118 (KVLIVDDHPA…ELLLAAKAVL (116 aa)). 4-aspartylphosphate occurs at positions 9 and 53. The HTH luxR-type domain occupies 140–205 (EARMLESLSD…GLIDFARRHE (66 aa)). Positions 155–174 (LQYLANGNTNKAIAQQLFLS) form a DNA-binding region, H-T-H motif.

Probable transcriptional regulator. The polypeptide is Putative transcriptional regulator (Pseudomonas aeruginosa (strain ATCC 15692 / DSM 22644 / CIP 104116 / JCM 14847 / LMG 12228 / 1C / PRS 101 / PAO1)).